The chain runs to 266 residues: Gas vesicle protein L (266 aa).

The protein belongs to the gas vesicle GvpF/GvpL family.

It localises to the gas vesicle. In terms of biological role, might be involved in nucleating gas vesicle formation. A minor component of the gas vesicle. Gas vesicles are hollow, gas filled proteinaceous nanostructures found in some microorganisms. It is not clear what function gas vesicles perform in soil bacteria. This is Gas vesicle protein L from Streptomyces sp. (strain CB03234).